A 291-amino-acid chain; its full sequence is Proteasome subunit beta (291 aa).

Residues 1–56 (MTRSFPDRLPTNLAFPGISVINQSSFVDLLRRQAPELLPVSLGGGQSGGGQQLSHG) constitute a propeptide, removed in mature form; by autocatalysis. Catalysis depends on Thr57, which acts as the Nucleophile.

Belongs to the peptidase T1B family. In terms of assembly, the 20S proteasome core is composed of 14 alpha and 14 beta subunits that assemble into four stacked heptameric rings, resulting in a barrel-shaped structure. The two inner rings, each composed of seven catalytic beta subunits, are sandwiched by two outer rings, each composed of seven alpha subunits. The catalytic chamber with the active sites is on the inside of the barrel. Has a gated structure, the ends of the cylinder being occluded by the N-termini of the alpha-subunits. Is capped by the proteasome-associated ATPase, ARC.

The protein localises to the cytoplasm. It catalyses the reaction Cleavage of peptide bonds with very broad specificity.. It functions in the pathway protein degradation; proteasomal Pup-dependent pathway. Its activity is regulated as follows. The formation of the proteasomal ATPase ARC-20S proteasome complex, likely via the docking of the C-termini of ARC into the intersubunit pockets in the alpha-rings, may trigger opening of the gate for substrate entry. Interconversion between the open-gate and close-gate conformations leads to a dynamic regulation of the 20S proteasome proteolysis activity. Component of the proteasome core, a large protease complex with broad specificity involved in protein degradation. The polypeptide is Proteasome subunit beta (Mycobacterium leprae (strain Br4923)).